We begin with the raw amino-acid sequence, 61 residues long: Small ribosomal subunit protein uS14 (61 aa).

The Zn(2+) site is built by Cys-24, Cys-27, Cys-40, and Cys-43.

It belongs to the universal ribosomal protein uS14 family. Zinc-binding uS14 subfamily. Part of the 30S ribosomal subunit. Contacts proteins S3 and S10. Requires Zn(2+) as cofactor.

Binds 16S rRNA, required for the assembly of 30S particles and may also be responsible for determining the conformation of the 16S rRNA at the A site. The polypeptide is Small ribosomal subunit protein uS14 (Bifidobacterium longum (strain DJO10A)).